The chain runs to 265 residues: Hydroxyethylthiazole kinase 2 (265 aa).

A substrate-binding site is contributed by Met-39. Residues Lys-115 and Thr-168 each coordinate ATP. Position 195 (Gly-195) interacts with substrate.

Belongs to the Thz kinase family. It depends on Mg(2+) as a cofactor.

It catalyses the reaction 5-(2-hydroxyethyl)-4-methylthiazole + ATP = 4-methyl-5-(2-phosphooxyethyl)-thiazole + ADP + H(+). The protein operates within cofactor biosynthesis; thiamine diphosphate biosynthesis; 4-methyl-5-(2-phosphoethyl)-thiazole from 5-(2-hydroxyethyl)-4-methylthiazole: step 1/1. Catalyzes the phosphorylation of the hydroxyl group of 4-methyl-5-beta-hydroxyethylthiazole (THZ). The protein is Hydroxyethylthiazole kinase 2 of Clostridium botulinum (strain Okra / Type B1).